A 933-amino-acid chain; its full sequence is Isoleucine--tRNA ligase (933 aa).

The 'HIGH' region motif lies at 57 to 67 (PYANGNIHVGH). E554 provides a ligand contact to L-isoleucyl-5'-AMP. The 'KMSKS' region motif lies at 595–599 (KMSKS). K598 lines the ATP pocket.

Belongs to the class-I aminoacyl-tRNA synthetase family. IleS type 1 subfamily. Monomer.

It is found in the cytoplasm. It catalyses the reaction tRNA(Ile) + L-isoleucine + ATP = L-isoleucyl-tRNA(Ile) + AMP + diphosphate. In terms of biological role, catalyzes the attachment of isoleucine to tRNA(Ile). As IleRS can inadvertently accommodate and process structurally similar amino acids such as valine, to avoid such errors it has two additional distinct tRNA(Ile)-dependent editing activities. One activity is designated as 'pretransfer' editing and involves the hydrolysis of activated Val-AMP. The other activity is designated 'posttransfer' editing and involves deacylation of mischarged Val-tRNA(Ile). In Streptococcus pyogenes serotype M6 (strain ATCC BAA-946 / MGAS10394), this protein is Isoleucine--tRNA ligase.